The primary structure comprises 479 residues: Acyltransferase easC (479 aa).

Catalysis depends on H161, which acts as the Proton acceptor.

It belongs to the plant acyltransferase family. As to quaternary structure, monomer.

It participates in antibiotic biosynthesis. Functionally, acyltransferase; part of the gene cluster that mediates the biosynthesis of emericellamides, secondary metabolites acting as antibiotics. The biosynthesis of emericellamides initiates from the highly reducing polyketide synthase easB which catalyzes the formation of the linear polyketide chain. EasB produces several polyketides that can be further processed by the downstream enzymes. The polyketides are released from easB as linear polyketide carboxylic acids, which are converted to CoA thioesters by the acyl-CoA ligase easD. The substrates are then loaded onto the acyltransferase easC, which shuttles them to the first thiolation (T) domain of the nonribosomal peptide synthetase easA. EasA then performs condensation of the polyketides with one glycine, two alanine, one valine and one leucine residues. A last step of cyclization leads to the production of emericellamides. The polypeptide is Acyltransferase easC (Emericella nidulans (strain FGSC A4 / ATCC 38163 / CBS 112.46 / NRRL 194 / M139) (Aspergillus nidulans)).